A 315-amino-acid chain; its full sequence is MVIIYIFLFLSSAIIDSTGLAKAQKLDAIGGKGGKQWDDGADHDNVAKVYIRGGLEGIQYIKFDYVKDGKTIDASIHGVSGSGFTQTFEIDYQNSEYIVSVDGYYDKSGTMQALEFKTNLKTSEVIGYPKGTTKFSLGGVNGKMVIGFHGSAGKVLNSIGAYLTTAPPTKSQLVGGLTGGEPWDDGSNYDGVKKISVTYISTLIRSINVDYEKDGQVVTRYHGMKNGDTEEFVIDYPNEYLISVEGTYNILPDDNVLVIRSLIFKTSKGRISPTYGFVSGTKFVLESQGNAIVGFYGRDGGAFDAIGVYFSPIPS.

An N-terminal signal peptide occupies residues 1–23 (MVIIYIFLFLSSAIIDSTGLAKA). Jacalin-type lectin domains are found at residues 24-165 (QKLD…YLTT) and 168-312 (PTKS…YFSP).

This sequence belongs to the jacalin lectin family.

The chain is Jacalin-related lectin 10 (JAL10) from Arabidopsis thaliana (Mouse-ear cress).